Consider the following 330-residue polypeptide: Putative glycosyltransferase HI_0258 (330 aa).

Basic and acidic residues predominate over residues 1 to 31 (MTDRQTDRQTDRQTDRQTDRQTDRQTDRQTD). The tract at residues 1-32 (MTDRQTDRQTDRQTDRQTDRQTDRQTDRQTDG) is disordered. Residues 44 to 49 (SSDHYY) and 140 to 141 (DV) contribute to the UDP site. Residues Asp-140, Asp-142, and His-270 each contribute to the Mn(2+) site. 270–276 (HYCGPNK) is a binding site for UDP.

The protein belongs to the glycosyltransferase 8 family.

In Haemophilus influenzae (strain ATCC 51907 / DSM 11121 / KW20 / Rd), this protein is Putative glycosyltransferase HI_0258.